The sequence spans 306 residues: Low-density lipoprotein receptor class A domain-containing protein 4 (306 aa).

The Lumenal portion of the chain corresponds to 1 to 64 (MPEAGFQATN…PPGIFNSELE (64 aa)). Residues 11-48 (AFTECKFTCTSGKCLYLGSLVCNQQNDCGDNSDEENCL) form the LDL-receptor class A domain. Intrachain disulfides connect Cys19/Cys38 and Cys32/Cys47. The chain crosses the membrane as a helical span at residues 65-85 (FAQILIIVVVVTVMVVVVVCL). Residues 86–306 (LNHYKVSTRS…GKDRKPGDLV (221 aa)) are Cytoplasmic-facing. Residues 100–127 (PNQSQRQEDGLQPEGSLWPSDSSVQRPG) form a disordered region. Residues 180 to 183 (PPPY) carry the PPxY motif 1 motif. Positions 208–211 (PPNR) match the SMAD interaction motif (SIM) motif. A PPxY motif 2 motif is present at residues 252–255 (PPTY). The segment at 268 to 306 (FHHQHSNTHRGSRPQFQPNNSEGTIVPIKGKDRKPGDLV) is disordered. Residues 269-279 (HHQHSNTHRGS) are compositionally biased toward basic residues. The segment covering 281-290 (PQFQPNNSEG) has biased composition (polar residues). Positions 296–306 (KGKDRKPGDLV) are enriched in basic and acidic residues.

Belongs to the PMEPA1 family. In terms of assembly, interacts with PMEPA1. Interacts (via the SMAD interaction motif) with SMAD2 and SMAD3. Detected in all tissues tested.

It is found in the early endosome membrane. Functions as a negative regulator of TGF-beta signaling and thereby probably plays a role in cell proliferation, differentiation, apoptosis, motility, extracellular matrix production and immunosuppression. In the canonical TGF-beta pathway, ZFYVE9/SARA recruits the intracellular signal transducer and transcriptional modulators SMAD2 and SMAD3 to the TGF-beta receptor. Phosphorylated by the receptor, SMAD2 and SMAD3 then form a heteromeric complex with SMAD4 that translocates to the nucleus to regulate transcription. Through interaction with SMAD2 and SMAD3, LDLRAD4 may compete with ZFYVE9 and SMAD4 and prevent propagation of the intracellular signal. The sequence is that of Low-density lipoprotein receptor class A domain-containing protein 4 (Ldlrad4) from Mus musculus (Mouse).